A 214-amino-acid chain; its full sequence is Large ribosomal subunit protein uL4 (214 aa).

The disordered stretch occupies residues 56–86 (THKVKNRAEVSGTGKKPWKQKSTGKARAGSK). The span at 71–85 (KPWKQKSTGKARAGS) shows a compositional bias: basic residues.

It belongs to the universal ribosomal protein uL4 family. In terms of assembly, part of the 50S ribosomal subunit.

Its function is as follows. One of the primary rRNA binding proteins, this protein initially binds near the 5'-end of the 23S rRNA. It is important during the early stages of 50S assembly. It makes multiple contacts with different domains of the 23S rRNA in the assembled 50S subunit and ribosome. Forms part of the polypeptide exit tunnel. This chain is Large ribosomal subunit protein uL4, found in Mesomycoplasma hyopneumoniae (strain 232) (Mycoplasma hyopneumoniae).